The primary structure comprises 382 residues: Protein phosphatase 1A (382 aa).

Gly-2 is lipidated: N-myristoyl glycine. One can recognise a PPM-type phosphatase domain in the interval 23–291 (RYGLSSMQGW…DNMSVILICF (269 aa)). 4 residues coordinate Mn(2+): Asp-60, Gly-61, Asp-239, and Asp-282. Residues Ser-375 and Ser-377 each carry the phosphoserine modification.

The protein belongs to the PP2C family. In terms of assembly, monomer. Interacts with SMAD2; the interaction dephosphorylates SMAD2 in its C-terminal SXS motif resulting in disruption of the SMAD2/SMAD4 complex, SMAD2 nuclear export and termination of the TGF-beta-mediated signaling. Interacts with SMAD2; the interaction dephosphorylates SMAD2 in its C-terminal SXS motif resulting in disruption of the SMAD2/SMAD4 complex, SMAD2 nuclear export and termination of the TGF-beta-mediated signaling. Interacts with the phosphorylated form of IKBKB/IKKB. It depends on Mg(2+) as a cofactor. Mn(2+) serves as cofactor. In terms of processing, N-myristoylation is essential for the recognition of its substrates for dephosphorylation.

The protein localises to the nucleus. It is found in the cytoplasm. It localises to the cytosol. Its subcellular location is the membrane. The enzyme catalyses O-phospho-L-seryl-[protein] + H2O = L-seryl-[protein] + phosphate. It carries out the reaction O-phospho-L-threonyl-[protein] + H2O = L-threonyl-[protein] + phosphate. In terms of biological role, enzyme with a broad specificity. Negatively regulates TGF-beta signaling through dephosphorylating SMAD2 and SMAD3, resulting in their dissociation from SMAD4, nuclear export of the SMADs and termination of the TGF-beta-mediated signaling. Dephosphorylates PRKAA1 and PRKAA2. Plays an important role in the termination of TNF-alpha-mediated NF-kappa-B activation through dephosphorylating and inactivating IKBKB/IKKB. In Oryctolagus cuniculus (Rabbit), this protein is Protein phosphatase 1A (PPM1A).